Reading from the N-terminus, the 285-residue chain is Golgi phosphoprotein 3-like (285 aa).

The segment at Met-1–Asp-43 is disordered. Basic and acidic residues predominate over residues Arg-10–Asp-43. Residues Trp-67 and Arg-76 each contribute to the a 1,2-diacyl-sn-glycero-3-phospho-(1D-myo-inositol 4-phosphate) site. Phosphoserine is present on Ser-112. Residues Arg-157 and Arg-160 each coordinate a 1,2-diacyl-sn-glycero-3-phospho-(1D-myo-inositol 4-phosphate). A beta-hairpin required for oligomerization region spans residues Glu-176–Thr-187.

This sequence belongs to the GOLPH3/VPS74 family. In terms of assembly, homooligomer. Does not interact MYO18; differs from GOLPH3 by its inability to interact with MYO18. May interact with ARF1. As to expression, expressed in a subset of tissues tested with higher expression in salivary gland, small intestine and skin (at protein level).

Its subcellular location is the golgi apparatus. The protein resides in the golgi stack membrane. It localises to the trans-Golgi network membrane. In terms of biological role, phosphatidylinositol-4-phosphate-binding protein that may antagonize the action of GOLPH3 which is required for the process of vesicle budding at the Golgi and anterograde transport to the plasma membrane. The polypeptide is Golgi phosphoprotein 3-like (Golph3l) (Mus musculus (Mouse)).